Here is a 342-residue protein sequence, read N- to C-terminus: N-acetyl-gamma-glutamyl-phosphate reductase (342 aa).

Cysteine 149 is an active-site residue.

It belongs to the NAGSA dehydrogenase family. Type 1 subfamily.

The protein localises to the cytoplasm. The catalysed reaction is N-acetyl-L-glutamate 5-semialdehyde + phosphate + NADP(+) = N-acetyl-L-glutamyl 5-phosphate + NADPH + H(+). It participates in amino-acid biosynthesis; L-arginine biosynthesis; N(2)-acetyl-L-ornithine from L-glutamate: step 3/4. Functionally, catalyzes the NADPH-dependent reduction of N-acetyl-5-glutamyl phosphate to yield N-acetyl-L-glutamate 5-semialdehyde. This chain is N-acetyl-gamma-glutamyl-phosphate reductase, found in Nitrosomonas europaea (strain ATCC 19718 / CIP 103999 / KCTC 2705 / NBRC 14298).